A 90-amino-acid chain; its full sequence is Cell division topological specificity factor (90 aa).

The protein belongs to the MinE family.

In terms of biological role, prevents the cell division inhibition by proteins MinC and MinD at internal division sites while permitting inhibition at polar sites. This ensures cell division at the proper site by restricting the formation of a division septum at the midpoint of the long axis of the cell. This Francisella tularensis subsp. tularensis (strain FSC 198) protein is Cell division topological specificity factor.